The following is a 540-amino-acid chain: GMP synthase [glutamine-hydrolyzing] (540 aa).

The Glutamine amidotransferase type-1 domain maps to 29-222; sequence KILIVDFGSQ…VRKVAGLTGD (194 aa). Cys106 serves as the catalytic Nucleophile. Residues His196 and Glu198 contribute to the active site. The 193-residue stretch at 223 to 415 folds into the GMPS ATP-PPase domain; sequence WTMRAFREEA…LGLPDVFVGR (193 aa). Position 250-256 (250-256) interacts with ATP; the sequence is SGGVDSA.

Homodimer.

It carries out the reaction XMP + L-glutamine + ATP + H2O = GMP + L-glutamate + AMP + diphosphate + 2 H(+). It functions in the pathway purine metabolism; GMP biosynthesis; GMP from XMP (L-Gln route): step 1/1. In terms of biological role, catalyzes the synthesis of GMP from XMP. The polypeptide is GMP synthase [glutamine-hydrolyzing] (Rhodopseudomonas palustris (strain ATCC BAA-98 / CGA009)).